We begin with the raw amino-acid sequence, 83 residues long: Small ribosomal subunit protein uS17 (83 aa).

Belongs to the universal ribosomal protein uS17 family. As to quaternary structure, part of the 30S ribosomal subunit.

Its function is as follows. One of the primary rRNA binding proteins, it binds specifically to the 5'-end of 16S ribosomal RNA. The chain is Small ribosomal subunit protein uS17 from Colwellia psychrerythraea (strain 34H / ATCC BAA-681) (Vibrio psychroerythus).